Reading from the N-terminus, the 438-residue chain is Elongation factor 1-alpha (438 aa).

Residues 5–228 enclose the tr-type G domain; the sequence is KPHLNLVVIG…ALDSLEPPPK (224 aa). The interval 14–21 is G1; sequence GHVDHGKS. 14-21 provides a ligand contact to GTP; the sequence is GHVDHGKS. S21 serves as a coordination point for Mg(2+). The interval 70-74 is G2; sequence GVTIA. The segment at 91-94 is G3; sequence DAPG. GTP is bound by residues 91-95 and 153-156; these read DAPGH and NKMD. The segment at 153–156 is G4; it reads NKMD. Positions 194–196 are G5; that stretch reads SAW.

The protein belongs to the TRAFAC class translation factor GTPase superfamily. Classic translation factor GTPase family. EF-Tu/EF-1A subfamily.

The protein resides in the cytoplasm. The catalysed reaction is GTP + H2O = GDP + phosphate + H(+). Functionally, GTP hydrolase that promotes the GTP-dependent binding of aminoacyl-tRNA to the A-site of ribosomes during protein biosynthesis. This is Elongation factor 1-alpha from Staphylothermus marinus (strain ATCC 43588 / DSM 3639 / JCM 9404 / F1).